Reading from the N-terminus, the 112-residue chain is Protein lin-52 homolog (112 aa).

It belongs to the lin-52 family. In terms of assembly, component of the DREAM complex.

The sequence is that of Protein lin-52 homolog (lin52) from Tetraodon nigroviridis (Spotted green pufferfish).